A 103-amino-acid chain; its full sequence is Salivary thrombin inhibitor anophelin (103 aa).

A signal peptide spans 1 to 21 (MASKLFVLAFLCLALVVVVQS). Residues 24–103 (QYARGDVPTY…PAASSSESDE (80 aa)) are disordered. Residues 56–68 (EEFDPSLLEEHAD) form a blocks exosite I of host thrombin region. Residues 74 to 77 (DPGR) form a blocks active site cleft of host thrombin in a reverse direction compared to substrates region. Residues 91-103 (ASAPAASSSESDE) show a composition bias toward low complexity.

Belongs to the anophelin family. As to quaternary structure, interacts with human F2 (thrombin); the interaction results in thrombin inhibition. Female salivary gland (at protein level). Not detected in female midgut, head, carcass and male tissues (at protein level).

The protein resides in the secreted. Increasing concentration of NaCl decreases affinity for thrombin. In terms of biological role, salivary protein with anticoagulant activity that inhibits host thrombin (F2); binds to the proteinase in a reverse orientation (opposite to substrates). The chain is Salivary thrombin inhibitor anophelin from Anopheles gambiae (African malaria mosquito).